A 658-amino-acid chain; its full sequence is Protein kinase and PP2C-like domain-containing protein (658 aa).

A Protein kinase domain is found at 30 to 314; that stretch reads FTLLSPIAKG…DNVVLELESI (285 aa). Residues 36 to 44 and lysine 57 each bind ATP; that span reads IAKGSESVV. Catalysis depends on aspartate 149, which acts as the Proton acceptor. Positions 392-648 constitute a PPM-type phosphatase domain; the sequence is SCGSFATCGR…DNITVIVVFL (257 aa). Aspartate 428, glycine 429, aspartate 599, and aspartate 639 together coordinate Mn(2+).

In the N-terminal section; belongs to the protein kinase superfamily. Ser/Thr protein kinase family. It in the C-terminal section; belongs to the PP2C family. Mg(2+) serves as cofactor. The cofactor is Mn(2+).

It catalyses the reaction L-seryl-[protein] + ATP = O-phospho-L-seryl-[protein] + ADP + H(+). The enzyme catalyses L-threonyl-[protein] + ATP = O-phospho-L-threonyl-[protein] + ADP + H(+). The catalysed reaction is O-phospho-L-seryl-[protein] + H2O = L-seryl-[protein] + phosphate. It carries out the reaction O-phospho-L-threonyl-[protein] + H2O = L-threonyl-[protein] + phosphate. The polypeptide is Protein kinase and PP2C-like domain-containing protein (Arabidopsis thaliana (Mouse-ear cress)).